The primary structure comprises 134 residues: Small ribosomal subunit protein uS11 (134 aa).

2 disordered regions span residues 1-22 and 114-134; these read MPPK…KNVA and SIQD…RRRV. The segment covering 9–22 has biased composition (basic residues); sequence AAKKVRRKEKKNVA.

Belongs to the universal ribosomal protein uS11 family. As to quaternary structure, part of the 30S ribosomal subunit. Interacts with proteins S7 and S18. Binds to IF-3.

Located on the platform of the 30S subunit, it bridges several disparate RNA helices of the 16S rRNA. Forms part of the Shine-Dalgarno cleft in the 70S ribosome. The chain is Small ribosomal subunit protein uS11 from Streptomyces coelicolor (strain ATCC BAA-471 / A3(2) / M145).